The sequence spans 353 residues: Spermidine/putrescine import ATP-binding protein PotA (353 aa).

An ABC transporter domain is found at 7–237 (IRFERVTKEY…PINRFVADFI (231 aa)). 39-46 (GPSGCGKT) provides a ligand contact to ATP.

Belongs to the ABC transporter superfamily. Spermidine/putrescine importer (TC 3.A.1.11.1) family. In terms of assembly, the complex is composed of two ATP-binding proteins (PotA), two transmembrane proteins (PotB and PotC) and a solute-binding protein (PotD).

It localises to the cell membrane. The catalysed reaction is ATP + H2O + polyamine-[polyamine-binding protein]Side 1 = ADP + phosphate + polyamineSide 2 + [polyamine-binding protein]Side 1.. Functionally, part of the ABC transporter complex PotABCD involved in spermidine/putrescine import. Responsible for energy coupling to the transport system. This Geobacillus kaustophilus (strain HTA426) protein is Spermidine/putrescine import ATP-binding protein PotA.